The primary structure comprises 280 residues: Protein synthesis inhibitor II (280 aa).

The residue at position 1 (alanine 1) is an N-acetylalanine. Glutamate 174 is an active-site residue.

It belongs to the ribosome-inactivating protein family. Type 1 RIP subfamily.

Its subcellular location is the cytoplasm. It carries out the reaction Endohydrolysis of the N-glycosidic bond at one specific adenosine on the 28S rRNA.. In terms of biological role, inhibits the elongation phase of protein synthesis. It inactivates fungal ribosomes even more effectively than mammalian ribosomes and is thought to function as a constitutive antifungal agent in plants. In Hordeum vulgare (Barley), this protein is Protein synthesis inhibitor II (RIP30A).